Consider the following 197-residue polypeptide: Probable NADPH:quinone oxidoreductase 1 (197 aa).

It belongs to the SsuE family. As to quaternary structure, homotetramer. Requires FMN as cofactor.

The catalysed reaction is a quinone + NADH + H(+) = a quinol + NAD(+). The enzyme catalyses a quinone + NADPH + H(+) = a quinol + NADP(+). The enzyme apparently serves as a quinone reductase in connection with conjugation reactions of hydroquinones involved in detoxification pathways. The chain is Probable NADPH:quinone oxidoreductase 1 from Oryza sativa subsp. japonica (Rice).